A 20-amino-acid chain; its full sequence is Protein PR-L6 (20 aa).

The protein belongs to the BetVI family.

This Lupinus luteus (European yellow lupine) protein is Protein PR-L6.